The primary structure comprises 1054 residues: Desmoglein-1 (1054 aa).

The N-terminal stretch at 1–23 is a signal peptide; the sequence is MNWHFLRTATVLLIFLVVVEINS. A propeptide spanning residues 24–49 is cleaved from the precursor; it reads EFRIQVRDYNTKNGTIKWHSIRRQKR. N-linked (GlcNAc...) asparagine glycans are attached at residues asparagine 36, asparagine 110, and asparagine 180. Cadherin domains lie at 50-157, 158-269, 270-389, and 386-493; these read EWIK…PPVF, SMST…IPYM, EPSS…RPGS, and RPGS…KDSE. The Extracellular portion of the chain corresponds to 50–566; it reads EWIKFAAACR…NLSDNVHFGP (517 aa). Positions 487–554 are disordered; the sequence is GWEKDSEKVT…QSNNNHQELG (68 aa). Low complexity predominate over residues 496-507; it reads TSSQNSGSSTGD. Over residues 508–517 the composition is skewed to gly residues; it reads SSGGTGGGGR. Positions 523–534 are enriched in low complexity; sequence GDTTTNTGGKTS. The segment covering 542 to 554 has biased composition (polar residues); the sequence is TQTQSNNNHQELG. Asparagine 557 carries N-linked (GlcNAc...) asparagine glycosylation. Residues 567–587 traverse the membrane as a helical segment; it reads AGIGLLIMGFLVLGLVPFLLM. Residues 588–1054 lie on the Cytoplasmic side of the membrane; sequence CCDCGGAPGA…TKYSTVQYTK (467 aa). 5 Desmoglein repeat repeats span residues 830-856, 857-886, 887-916, 917-944, and 945-973; these read TYPS…TVTE, SYTT…ERVV, GPIS…ERVI, APSS…ERVI, and RPAS…ERVV. The interval 1018–1040 is disordered; that stretch reads GHVRSSSDHHFSQTLGSASPSTA. A compositionally biased stretch (polar residues) spans 1029–1040; sequence SQTLGSASPSTA.

Binds to JUP/plakoglobin. Interacts with PKP2. Interacts with DSC3; there is evidence to suggest that the interaction promotes cell-cell adhesion of keratinocytes.

The protein localises to the cell membrane. It is found in the cell junction. It localises to the desmosome. Its subcellular location is the cytoplasm. The protein resides in the nucleus. Its function is as follows. Component of intercellular desmosome junctions. Involved in the interaction of plaque proteins and intermediate filaments mediating cell-cell adhesion. This chain is Desmoglein-1 (DSG1), found in Canis lupus familiaris (Dog).